Reading from the N-terminus, the 275-residue chain is ATP synthase subunit delta (275 aa).

The protein belongs to the ATPase delta chain family. F-type ATPases have 2 components, F(1) - the catalytic core - and F(0) - the membrane proton channel. F(1) has five subunits: alpha(3), beta(3), gamma(1), delta(1), epsilon(1). F(0) has three main subunits: a(1), b(2) and c(10-14). The alpha and beta chains form an alternating ring which encloses part of the gamma chain. F(1) is attached to F(0) by a central stalk formed by the gamma and epsilon chains, while a peripheral stalk is formed by the delta and b chains.

The protein resides in the cell membrane. In terms of biological role, f(1)F(0) ATP synthase produces ATP from ADP in the presence of a proton or sodium gradient. F-type ATPases consist of two structural domains, F(1) containing the extramembraneous catalytic core and F(0) containing the membrane proton channel, linked together by a central stalk and a peripheral stalk. During catalysis, ATP synthesis in the catalytic domain of F(1) is coupled via a rotary mechanism of the central stalk subunits to proton translocation. This protein is part of the stalk that links CF(0) to CF(1). It either transmits conformational changes from CF(0) to CF(1) or is implicated in proton conduction. This is ATP synthase subunit delta from Pseudarthrobacter chlorophenolicus (strain ATCC 700700 / DSM 12829 / CIP 107037 / JCM 12360 / KCTC 9906 / NCIMB 13794 / A6) (Arthrobacter chlorophenolicus).